The primary structure comprises 263 residues: uncharacterized protein (263 aa).

A disordered region spans residues 183-263 (APHDRPEGVP…PPSTNTKGAA (81 aa)). 2 stretches are compositionally biased toward polar residues: residues 230–239 (SRPTAPSRPS) and 253–263 (TPPSTNTKGAA).

Probably does not play a direct role in plasmid integration or excision. This is an uncharacterized protein from Saccharopolyspora erythraea (Streptomyces erythraeus).